The chain runs to 567 residues: Phenylalanine ammonia-lyase (567 aa).

Catalysis depends on Y78, which acts as the Proton donor/acceptor. A cross-link (5-imidazolinone (Ala-Gly)) is located at residues 167–169; it reads ASG. 2,3-didehydroalanine (Ser) is present on S168. The (E)-cinnamate site is built by N223, Q311, R317, N347, K419, E448, and N451.

The protein belongs to the PAL/histidase family. In terms of assembly, homotetramer. In terms of processing, contains an active site 4-methylidene-imidazol-5-one (MIO), which is formed autocatalytically by cyclization and dehydration of residues Ala-Ser-Gly.

It is found in the cytoplasm. The enzyme catalyses L-phenylalanine = (E)-cinnamate + NH4(+). It functions in the pathway phenylpropanoid metabolism; trans-cinnamate biosynthesis; trans-cinnamate from L-phenylalanine: step 1/1. Its function is as follows. Catalyzes the non-oxidative deamination of L-phenylalanine to form trans-cinnamic acid, the first step in the phenylpropanoid pathway. The chain is Phenylalanine ammonia-lyase from Trichormus variabilis (strain ATCC 29413 / PCC 7937) (Anabaena variabilis).